Consider the following 731-residue polypeptide: DNA ligase (731 aa).

NAD(+)-binding positions include 59-63, 108-109, and Glu142; these read DSEYD and SL. The active-site N6-AMP-lysine intermediate is the Lys144. Arg165, Glu202, Lys318, and Lys342 together coordinate NAD(+). Residues Cys434, Cys437, Cys452, and Cys458 each contribute to the Zn(2+) site. In terms of domain architecture, BRCT spans 645 to 731; the sequence is LASSPLSGKI…ENDGQDSIKI (87 aa).

Belongs to the NAD-dependent DNA ligase family. LigA subfamily. Mg(2+) is required as a cofactor. Requires Mn(2+) as cofactor.

It carries out the reaction NAD(+) + (deoxyribonucleotide)n-3'-hydroxyl + 5'-phospho-(deoxyribonucleotide)m = (deoxyribonucleotide)n+m + AMP + beta-nicotinamide D-nucleotide.. Functionally, DNA ligase that catalyzes the formation of phosphodiester linkages between 5'-phosphoryl and 3'-hydroxyl groups in double-stranded DNA using NAD as a coenzyme and as the energy source for the reaction. It is essential for DNA replication and repair of damaged DNA. The polypeptide is DNA ligase (Zymomonas mobilis subsp. mobilis (strain ATCC 31821 / ZM4 / CP4)).